Consider the following 1385-residue polypeptide: Contactin-associated protein 1 (1385 aa).

The N-terminal stretch at 1 to 20 is a signal peptide; the sequence is MMSLRLFSILLATVVSGAWG. Residues 21 to 1284 are Extracellular-facing; the sequence is WGYYGCNEEL…PYYHDDGWIA (1264 aa). Residues 26-169 enclose the F5/8 type C domain; sequence CNEELVGPLY…IGLRLGIYGC (144 aa). A disulfide bridge connects residues Cys-26 and Cys-169. N-linked (GlcNAc...) asparagine glycans are attached at residues Asn-121, Asn-129, and Asn-277. 2 Laminin G-like domains span residues 204 to 356 and 390 to 539; these read FKTE…AFRC and FRTW…FDTC. A disulfide bridge connects residues Cys-324 and Cys-356. Asn-421, Asn-500, and Asn-519 each carry an N-linked (GlcNAc...) asparagine glycan. 4 disulfide bridges follow: Cys-507/Cys-539, Cys-545/Cys-556, Cys-550/Cys-565, and Cys-567/Cys-577. Residues 545 to 577 form the EGF-like 1 domain; it reads CSPNMCEHDGRCYQSWDDFICYCELTGYKGVTC. The 220-residue stretch at 577–796 folds into the Fibrinogen C-terminal domain; sequence CHEPLYKESC…NTISFHTGAA (220 aa). Asn-598, Asn-654, Asn-665, Asn-764, Asn-805, Asn-844, Asn-861, Asn-949, and Asn-957 each carry an N-linked (GlcNAc...) asparagine glycan. The Laminin G-like 3 domain maps to 814 to 958; that stretch reads FRTSAPSGVF…NASEGTFPNC (145 aa). 4 disulfides stabilise this stretch: Cys-931/Cys-958, Cys-962/Cys-975, Cys-969/Cys-984, and Cys-986/Cys-996. An EGF-like 2 domain is found at 962–996; sequence CTHPRFPCFHGGRCVERYSYYTCDCDLTAFDGPYC. N-linked (GlcNAc...) asparagine glycans are attached at residues Asn-1079 and Asn-1148. Positions 1089 to 1251 constitute a Laminin G-like 4 domain; it reads FSTNSAPAVL…VQGELSESNC (163 aa). A disulfide bond links Cys-1210 and Cys-1251. A helical transmembrane segment spans residues 1285–1305; that stretch reads ILLGFLVAFLLLGLVGMLVLF. Residues 1306–1385 lie on the Cytoplasmic side of the membrane; sequence YLQNHRYKGS…PQILEESRSE (80 aa). The segment at 1317–1385 is disordered; that stretch reads HTNEPKATHD…PQILEESRSE (69 aa). Positions 1319 to 1329 are enriched in basic and acidic residues; it reads NEPKATHDSHP. Residues 1334-1367 are compositionally biased toward pro residues; sequence PLPPSGPAQAPAPTPAPTQLPTPAPAPAPAPASG. The SH3-binding signature appears at 1334-1370; it reads PLPPSGPAQAPAPTPAPTQLPTPAPAPAPAPASGPGP. Position 1384 is a phosphoserine (Ser-1384).

It belongs to the neurexin family. In terms of assembly, interacts with CNTN1/contactin in cis form. As to expression, expressed in brain. In myelinated nerve fibers predominantly found in paranodal axoglial junctions. In the internodal region of myelinated axons in the CNS and the PNS also found as a thin line apposing the inner mesaxon of the myelin sheath. In PNS neurons this line forms a circumferential ring that apposes the innermost aspect of Schmidt-Lanterman incisures.

The protein localises to the membrane. Its subcellular location is the cell junction. It localises to the paranodal septate junction. Functionally, required, with CNTNAP2, for radial and longitudinal organization of myelinated axons. Plays a role in the formation of functional distinct domains critical for saltatory conduction of nerve impulses in myelinated nerve fibers. Demarcates the paranodal region of the axo-glial junction. In association with contactin involved in the signaling between axons and myelinating glial cells. The sequence is that of Contactin-associated protein 1 (Cntnap1) from Mus musculus (Mouse).